The following is a 630-amino-acid chain: PR domain zinc finger protein 5 (630 aa).

Residues 8–124 form the SET domain; the sequence is DRFSLKSSRV…TDTELLIGYL (117 aa). The C2H2-type 1 zinc-finger motif lies at 167–190; sequence YACPQCESSFTSEDILAEHLQTLH. The C2H2-type 2; atypical zinc finger occupies 199 to 221; sequence FKCKNCGKKFPVKQALQRHVLQC. The C2H2-type 3; atypical zinc-finger motif lies at 234–256; the sequence is FQCSVCNSSFSSASSFEQHQETC. 13 C2H2-type zinc fingers span residues 262 to 287, 295 to 317, 320 to 342, 348 to 370, 376 to 398, 404 to 426, 432 to 455, 461 to 483, 489 to 511, 517 to 539, 545 to 567, 573 to 595, and 602 to 625; these read FVCKADSCGKRLKSKDALKRHQENVH, LICSVCNKKCSSASSLQEHRKIH, FDCQECMKKFISANQLKRHMITH, YNCEICNKSFKRLDQVGAHKVIH, YKCKLCGKGFAHRNVYKNHKKTH, FQCEECKALFRTPFSLQRHLLIH, FKCHHCDATFKRKDTLNVHVQVVH, YRCELCNKAFVTPSVLRSHKKTH, KICPYCGQKFASSGTLRVHIRSH, YQCPYCEKGFSKNDGLKMHIRTH, YKCSECSKAFSQKRGLDEHKRTH, FQCDVCDLAFSLKKMLIRHKMTH, and AECQFCHKKFTRNDYLKVHMDNIH.

It belongs to the class V-like SAM-binding methyltransferase superfamily. As to quaternary structure, interacts with EHMT2/G9A, GFI1 and HDAC1. In terms of tissue distribution, widely expressed with highest levels in colon and ovary. Tends to be silenced in breast, colorectal, gastric and liver cancer tissues.

The protein localises to the nucleus. Sequence-specific DNA-binding transcription factor. Represses transcription at least in part by recruitment of the histone methyltransferase EHMT2/G9A and histone deacetylases such as HDAC1. Regulates hematopoiesis-associated protein-coding and microRNA (miRNA) genes. May regulate the expression of proteins involved in extracellular matrix development and maintenance, including fibrillar collagens, such as COL4A1 and COL11A1, connective tissue components, such as HAPLN1, and molecules regulating cell migration and adhesion, including EDIL3 and TGFB2. May cause G2/M arrest and apoptosis in cancer cells. This Homo sapiens (Human) protein is PR domain zinc finger protein 5 (PRDM5).